The chain runs to 415 residues: Enolase (415 aa).

Gln161 provides a ligand contact to (2R)-2-phosphoglycerate. The active-site Proton donor is Glu203. Positions 240, 281, and 308 each coordinate Mg(2+). (2R)-2-phosphoglycerate contacts are provided by Lys333, Arg362, Ser363, and Lys384. The active-site Proton acceptor is Lys333.

It belongs to the enolase family. It depends on Mg(2+) as a cofactor.

It is found in the cytoplasm. The protein localises to the secreted. Its subcellular location is the cell surface. It catalyses the reaction (2R)-2-phosphoglycerate = phosphoenolpyruvate + H2O. The protein operates within carbohydrate degradation; glycolysis; pyruvate from D-glyceraldehyde 3-phosphate: step 4/5. Its function is as follows. Catalyzes the reversible conversion of 2-phosphoglycerate (2-PG) into phosphoenolpyruvate (PEP). It is essential for the degradation of carbohydrates via glycolysis. This chain is Enolase, found in Campylobacter hominis (strain ATCC BAA-381 / DSM 21671 / CCUG 45161 / LMG 19568 / NCTC 13146 / CH001A).